The sequence spans 542 residues: Putative selenium-binding protein (542 aa).

It belongs to the selenium-binding protein family.

In Caenorhabditis elegans, this protein is Putative selenium-binding protein.